The sequence spans 952 residues: Meiosis-specific coiled-coil domain-containing protein MEIOC (952 aa).

3 disordered regions span residues 1–23, 609–629, and 933–952; these read MEVRRGDTCPRPHPSGLREEGLE, QAKPQSGHYDPEEGPKHLDGL, and VHESINSSNPMNQRGETNKH. Over residues 617–627 the composition is skewed to basic and acidic residues; that stretch reads YDPEEGPKHLD. Positions 936-952 are enriched in polar residues; that stretch reads SINSSNPMNQRGETNKH.

As to quaternary structure, interacts with YTHDC2; binds transcript that regulate the mitotic cell cycle inhibiting progression into metaphase, thereby allowing meiotic prophase to proceed normally. Interacts with RBM46. In terms of tissue distribution, expressed in fetal ovaries. Expressed in testis.

Its subcellular location is the cytoplasm. It localises to the nucleus. Is required for meiosis completion in both male and female germ cells. Confers stability to numerous meiotic mRNAs in gonads allowing proper initiation and progression into meiosis prophase I. The function may involve YTHDC2 and is independent of induction by retinoic acid (RA). Maintains an extended meiotic prophase I by properly promoting the transition from a mitotic to a meiotic cell cycle program by binding transcripts through its interaction with YTHDC2 that regulate the mitotic cell cycle. The polypeptide is Meiosis-specific coiled-coil domain-containing protein MEIOC (Homo sapiens (Human)).